The chain runs to 84 residues: Small ribosomal subunit protein bS16 (84 aa).

This sequence belongs to the bacterial ribosomal protein bS16 family.

The chain is Small ribosomal subunit protein bS16 from Dichelobacter nodosus (strain VCS1703A).